Consider the following 308-residue polypeptide: Pycsar effector protein PaPycTIR (308 aa).

54-143 (LITEDAEDSE…RQVTRQLVDR (90 aa)) contacts a nucleoside 3',5'-cyclic phosphate. Residues 160–278 (VFIICSVEAL…DLKGLTTIGY (119 aa)) form a TIR-like region.

It is found in the cytoplasm. It carries out the reaction NAD(+) + H2O = ADP-D-ribose + nicotinamide + H(+). Pycsar (pyrimidine cyclase system for antiphage resistance) provides immunity against bacteriophage. The pyrimidine cyclase (PycC) synthesizes cyclic nucleotides in response to infection; these serve as specific second messenger signals. The signals activate the adjacent effector, leading to bacterial cell death and abortive phage infection. A clade A Pycsar system. Its function is as follows. The effector gene of a two-gene Pycsar system. Expression of this and adjacent uridylate cyclase PaPycC (AC P0DV40) probably confers resistance to bacteriophage. The genes are probably only expressed in response to bacteriophage infection. Probably only responds to cUMP (produced by its cognate NTP cyclase), acts by depleting cellular NAD(+) levels. This chain is Pycsar effector protein PaPycTIR, found in Pseudomonas aeruginosa.